Here is a 458-residue protein sequence, read N- to C-terminus: Cysteine--tRNA ligase (458 aa).

Position 28 (Cys28) interacts with Zn(2+). A 'HIGH' region motif is present at residues 30-40; sequence VTVYDLCHFGH. Zn(2+) is bound by residues Cys209, His234, and Glu238. A 'KMSKS' region motif is present at residues 266-270; sequence KMSKS. An ATP-binding site is contributed by Lys269.

The protein belongs to the class-I aminoacyl-tRNA synthetase family. Monomer. The cofactor is Zn(2+).

The protein resides in the cytoplasm. It catalyses the reaction tRNA(Cys) + L-cysteine + ATP = L-cysteinyl-tRNA(Cys) + AMP + diphosphate. In Mannheimia succiniciproducens (strain KCTC 0769BP / MBEL55E), this protein is Cysteine--tRNA ligase.